The chain runs to 132 residues: ATP synthase epsilon chain (132 aa).

The protein belongs to the ATPase epsilon chain family. F-type ATPases have 2 components, CF(1) - the catalytic core - and CF(0) - the membrane proton channel. CF(1) has five subunits: alpha(3), beta(3), gamma(1), delta(1), epsilon(1). CF(0) has three main subunits: a, b and c.

The protein resides in the cell membrane. Its function is as follows. Produces ATP from ADP in the presence of a proton gradient across the membrane. This Clostridium kluyveri (strain NBRC 12016) protein is ATP synthase epsilon chain.